A 503-amino-acid polypeptide reads, in one-letter code: ATP synthase subunit alpha (503 aa).

169–176 lines the ATP pocket; it reads GDRGTGKT.

Belongs to the ATPase alpha/beta chains family. In terms of assembly, F-type ATPases have 2 components, CF(1) - the catalytic core - and CF(0) - the membrane proton channel. CF(1) has five subunits: alpha(3), beta(3), gamma(1), delta(1), epsilon(1). CF(0) has three main subunits: a(1), b(2) and c(9-12). The alpha and beta chains form an alternating ring which encloses part of the gamma chain. CF(1) is attached to CF(0) by a central stalk formed by the gamma and epsilon chains, while a peripheral stalk is formed by the delta and b chains.

The protein resides in the cell inner membrane. It carries out the reaction ATP + H2O + 4 H(+)(in) = ADP + phosphate + 5 H(+)(out). Functionally, produces ATP from ADP in the presence of a proton gradient across the membrane. The alpha chain is a regulatory subunit. The sequence is that of ATP synthase subunit alpha from Leptospira borgpetersenii serovar Hardjo-bovis (strain L550).